The primary structure comprises 163 residues: Ribonuclease P protein component 4 (163 aa).

4 residues coordinate Zn(2+): C66, C69, C96, and C99. Residues 110 to 163 (GPRGGAPISPPAAEYGSGGRDSGEREDKGPQGPPRQGGRDNRQGGGHQGGPKGD) form a disordered region. A compositionally biased stretch (gly residues) spans 152 to 163 (QGGGHQGGPKGD).

Belongs to the eukaryotic/archaeal RNase P protein component 4 family. In terms of assembly, consists of a catalytic RNA component and at least 4-5 protein subunits. Requires Zn(2+) as cofactor.

It localises to the cytoplasm. It carries out the reaction Endonucleolytic cleavage of RNA, removing 5'-extranucleotides from tRNA precursor.. Part of ribonuclease P, a protein complex that generates mature tRNA molecules by cleaving their 5'-ends. This is Ribonuclease P protein component 4 from Aeropyrum pernix (strain ATCC 700893 / DSM 11879 / JCM 9820 / NBRC 100138 / K1).